We begin with the raw amino-acid sequence, 336 residues long: uncharacterized protein (336 aa).

Residues 297–316 (KKDLQKSEEEEHPNDDHVYM) show a composition bias toward basic and acidic residues. The disordered stretch occupies residues 297-336 (KKDLQKSEEEEHPNDDHVYMTEEDDMEKIERGIESLGNGH).

This is an uncharacterized protein from Invertebrate iridescent virus 6 (IIV-6).